A 548-amino-acid chain; its full sequence is Alpha-1,3-mannosyl-glycoprotein 4-beta-N-acetylglucosaminyltransferase B (548 aa).

Residues 1 to 7 are Cytoplasmic-facing; that stretch reads MRLRNGT. A helical; Signal-anchor for type II membrane protein transmembrane segment spans residues 8-28; sequence FLTLLLFCLCAFLSLSWYAAL. Topologically, residues 29 to 548 are lumenal; sequence SGQKGDVVDI…LSEIFLKKAD (520 aa). A coiled-coil region spans residues 36–83; it reads VDIYQREFLALRDRLHAAEQESLKRSKELNLVLEEIKRAVSERQALRD. Residues Asn87 and Asn103 are each glycosylated (N-linked (GlcNAc...) asparagine).

Belongs to the glycosyltransferase 54 family. Interacts with SLC35A3. The cofactor is a divalent metal cation. Post-translationally, N-glycosylated.

The protein localises to the golgi apparatus membrane. The enzyme catalyses N(4)-{beta-D-GlcNAc-(1-&gt;2)-alpha-D-Man-(1-&gt;3)-[beta-D-GlcNAc-(1-&gt;2)-alpha-D-Man-(1-&gt;6)]-beta-D-Man-(1-&gt;4)-beta-D-GlcNAc-(1-&gt;4)-beta-D-GlcNAc}-L-asparaginyl-[protein] + UDP-N-acetyl-alpha-D-glucosamine = N(4)-{beta-D-GlcNAc-(1-&gt;2)-[beta-D-GlcNAc-(1-&gt;4)]-alpha-D-Man-(1-&gt;3)-[beta-D-GlcNAc-(1-&gt;2)-alpha-D-Man-(1-&gt;6)]-beta-D-Man-(1-&gt;4)-beta-D-GlcNAc-(1-&gt;4)-beta-D-GlcNAc}-L-asparaginyl-[protein] + UDP + H(+). It carries out the reaction an N(4)-{beta-D-GlcNAc-(1-&gt;2)-alpha-D-Man-(1-&gt;3)-[alpha-D-Man-(1-&gt;6)]-beta-D-Man-(1-&gt;4)-beta-D-GlcNAc-(1-&gt;4)-beta-D-GlcNAc}-L-asparaginyl-[protein] + UDP-N-acetyl-alpha-D-glucosamine = an N(4)-{beta-D-GlcNAc-(1-&gt;2)-[beta-D-GlcNAc-(1-&gt;4)]-alpha-D-Man-(1-&gt;3)-[alpha-D-Man-(1-&gt;6)]-beta-D-Man-(1-&gt;4)-beta-D-GlcNAc-(1-&gt;4)-beta-D-GlcNAc}-L-asparaginyl-[protein] + UDP + H(+). It catalyses the reaction an N(4)-{beta-D-GlcNAc-(1-&gt;2)-alpha-D-Man-(1-&gt;3)-[beta-D-GlcNAc-(1-&gt;2)-[beta-D-GlcNAc-(1-&gt;6)]-alpha-D-Man-(1-&gt;6)]-beta-D-Man-(1-&gt;4)-beta-D-GlcNAc-(1-&gt;4)-beta-D-GlcNAc}-L-asparaginyl-[protein] + UDP-N-acetyl-alpha-D-glucosamine = an N(4)-{beta-D-GlcNAc-(1-&gt;2)-[beta-D-GlcNAc-(1-&gt;4)]-alpha-D-Man-(1-&gt;3)-[beta-D-GlcNAc-(1-&gt;2)-[beta-D-GlcNAc-(1-&gt;6)]-alpha-D-Man-(1-&gt;6)]-beta-D-Man-(1-&gt;4)-beta-D-GlcNAc-(1-&gt;4)-beta-D-GlcNAc}-L-asparaginyl-[protein] + UDP + H(+). The catalysed reaction is an N(4)-{beta-D-GlcNAc-(1-&gt;2)-alpha-D-Man-(1-&gt;3)-[beta-D-GlcNAc-(1-&gt;2)-alpha-D-Man-(1-&gt;6)]-beta-D-Man-(1-&gt;4)-beta-D-GlcNAc-(1-&gt;4)-[alpha-L-Fuc-(1-&gt;6)]-beta-D-GlcNAc}-L-asparaginyl-[protein] + UDP-N-acetyl-alpha-D-glucosamine = N(4)-{beta-D-GlcNAc-(1-&gt;2)-[beta-D-GlcNAc-(1-&gt;4)]-alpha-D-Man-(1-&gt;3)-[beta-D-GlcNAc-(1-&gt;2)-alpha-D-Man-(1-&gt;6)]-beta-D-Man-(1-&gt;4)-beta-D-GlcNAc-(1-&gt;4)-[alpha-L-Fuc-(1-&gt;6)]-beta-D-GlcNAc}-asparaginyl-[protein] + UDP + H(+). The enzyme catalyses an N(4)-{beta-D-GlcNAc-(1-&gt;2)-alpha-D-Man-(1-&gt;3)-[beta-D-Gal-(1-&gt;4)-beta-D-GlcNAc-(1-&gt;2)-alpha-D-Man-(1-&gt;6)]-beta-D-Man-(1-&gt;4)-beta-D-GlcNAc-(1-&gt;4)-beta-D-GlcNAc}-L-asparaginyl-[protein] + UDP-N-acetyl-alpha-D-glucosamine = an N(4)-{beta-D-GlcNAc-(1-&gt;2)-[beta-D-GlcNAc-(1-&gt;4)]-alpha-D-Man-(1-&gt;3)-[beta-D-Gal-(1-&gt;4)-beta-D-GlcNAc-(1-&gt;2)-alpha-D-Man-(1-&gt;6)]-beta-D-Man-(1-&gt;4)-beta-D-GlcNAc-(1-&gt;4)-beta-D-GlcNAc}-L-asparaginyl-[protein] + UDP + H(+). It carries out the reaction N(4)-{beta-D-GlcNAc-(1-&gt;2)-alpha-D-Man-(1-&gt;3)-[alpha-D-Man-(1-&gt;3)-{alpha-D-Man-(1-&gt;6)}-alpha-D-Man-(1-&gt;6)]-beta-D-Man-(1-&gt;4)-beta-D-GlcNAc-(1-&gt;4)-beta-D-GlcNAc}-asparaginyl-[protein] + UDP-N-acetyl-alpha-D-glucosamine = N(4)-{beta-D-GlcNAc-(1-&gt;2)-[beta-D-GlcNAc-(1-&gt;4)]-alpha-D-Man-(1-&gt;3)-[alpha-D-Man-(1-&gt;3)-{alpha-D-Man-(1-&gt;6)}-alpha-D-Man-(1-&gt;6)]-beta-D-Man-(1-&gt;4)-beta-D-GlcNAc-(1-&gt;4)-beta-D-GlcNAc}-asparaginyl-[protein] + UDP + H(+). It catalyses the reaction N(4)-{beta-D-GlcNAc-(1-&gt;2)-alpha-D-Man-(1-&gt;3)-beta-D-Man-(1-&gt;4)-beta-D-GlcNAc-(1-&gt;4)-beta-D-GlcNAc}-asparaginyl-[protein] + UDP-N-acetyl-alpha-D-glucosamine = N(4)-{beta-D-GlcNAc-(1-&gt;2)-[beta-D-GlcNAc-(1-&gt;4)]-alpha-D-Man-(1-&gt;3)-beta-D-Man-(1-&gt;4)-beta-D-GlcNAc-(1-&gt;4)-beta-D-GlcNAc}-asparaginyl-[protein] + UDP + H(+). The protein operates within protein modification; protein glycosylation. Glycosyltransferase that catalyzes the transfer of GlcNAc from UDP-GlcNAc to the GlcNAcbeta1-2Manalpha1-3 arm of the core structure of N-linked glycans through a beta1-4 linkage and participates in the production of tri- and tetra-antennary N-linked sugar chains. Prefers complex-type N-glycans over hybrid-types. Has lower affinities for donors or acceptors than MGAT4A, suggesting that, under physiological conditions, it is not the main contributor in N-glycan biosynthesis. In Mus musculus (Mouse), this protein is Alpha-1,3-mannosyl-glycoprotein 4-beta-N-acetylglucosaminyltransferase B.